A 447-amino-acid polypeptide reads, in one-letter code: Glutamate-1-semialdehyde 2,1-aminomutase (447 aa).

Lys277 carries the post-translational modification N6-(pyridoxal phosphate)lysine.

The protein belongs to the class-III pyridoxal-phosphate-dependent aminotransferase family. HemL subfamily. Homodimer. The cofactor is pyridoxal 5'-phosphate.

The protein localises to the cytoplasm. It catalyses the reaction (S)-4-amino-5-oxopentanoate = 5-aminolevulinate. The protein operates within porphyrin-containing compound metabolism; protoporphyrin-IX biosynthesis; 5-aminolevulinate from L-glutamyl-tRNA(Glu): step 2/2. This chain is Glutamate-1-semialdehyde 2,1-aminomutase, found in Arthrobacter sp. (strain FB24).